The chain runs to 459 residues: Sperm-tail PG-rich repeat-containing protein 2 (459 aa).

STPGR repeat units follow at residues 21 to 30 (VGPGSYQVPF), 63 to 73 (PGPGHYNVSEA), 119 to 148 (TLGP…NSSG), 157 to 203 (GPGP…QEKK), 213 to 243 (TPAP…FGQS), 257 to 268 (PGPGFYNVLNNT), 351 to 377 (PAPG…PRSL), 400 to 410 (GPGPAAYNPVL), and 433 to 443 (TPGPATYEISQ).

The chain is Sperm-tail PG-rich repeat-containing protein 2 (STPG2) from Homo sapiens (Human).